We begin with the raw amino-acid sequence, 413 residues long: Putative competence-damage inducible protein (413 aa).

Belongs to the CinA family.

The sequence is that of Putative competence-damage inducible protein from Lacticaseibacillus casei (strain BL23) (Lactobacillus casei).